A 417-amino-acid chain; its full sequence is Imidazolonepropionase (417 aa).

2 residues coordinate Fe(3+): H80 and H82. H80 and H82 together coordinate Zn(2+). Residues R89, Y152, and H187 each coordinate 4-imidazolone-5-propanoate. Y152 contacts N-formimidoyl-L-glutamate. H252 contacts Fe(3+). H252 is a binding site for Zn(2+). Residue E255 coordinates 4-imidazolone-5-propanoate. Residue D326 coordinates Fe(3+). D326 contacts Zn(2+). N328 and G330 together coordinate N-formimidoyl-L-glutamate. 4-imidazolone-5-propanoate is bound at residue S331.

The protein belongs to the metallo-dependent hydrolases superfamily. HutI family. It depends on Zn(2+) as a cofactor. Requires Fe(3+) as cofactor.

Its subcellular location is the cytoplasm. The catalysed reaction is 4-imidazolone-5-propanoate + H2O = N-formimidoyl-L-glutamate. Its pathway is amino-acid degradation; L-histidine degradation into L-glutamate; N-formimidoyl-L-glutamate from L-histidine: step 3/3. Functionally, catalyzes the hydrolytic cleavage of the carbon-nitrogen bond in imidazolone-5-propanoate to yield N-formimidoyl-L-glutamate. It is the third step in the universal histidine degradation pathway. This Bacteroides fragilis (strain YCH46) protein is Imidazolonepropionase.